Reading from the N-terminus, the 245-residue chain is tRNA pseudouridine synthase A (245 aa).

Aspartate 52 serves as the catalytic Nucleophile. Residue tyrosine 110 coordinates substrate.

It belongs to the tRNA pseudouridine synthase TruA family. As to quaternary structure, homodimer.

It carries out the reaction uridine(38/39/40) in tRNA = pseudouridine(38/39/40) in tRNA. Its function is as follows. Formation of pseudouridine at positions 38, 39 and 40 in the anticodon stem and loop of transfer RNAs. This Borrelia turicatae (strain 91E135) protein is tRNA pseudouridine synthase A.